The sequence spans 479 residues: POU domain, class 2, transcription factor 2 (479 aa).

5 disordered regions span residues 1–86 (MVHS…AQPH), 166–200 (TQAVTRPTLPDPHLSHPQPPKCLEPPSHPEEPSDL), 275–298 (SSLPSPNQLSSPSLGFDGLPGRRR), 357–393 (PCSAAPMLPSPGKPASYSPHMVTPQGGAGTLPLSQAS), and 409–479 (TLHP…PYQP). The segment covering 12–37 (RMSKPLEAEKQGLDSPSEHTDTERNG) has biased composition (basic and acidic residues). Over residues 38-60 (PDTNHQNPQNKTSPFSVSPTGPS) the composition is skewed to polar residues. The span at 76-85 (APLPPQPAQP) shows a compositional bias: pro residues. The region spanning 195-269 (EEPSDLEELE…LLEKWLNDAE (75 aa)) is the POU-specific domain. A compositionally biased stretch (low complexity) spans 275-288 (SSLPSPNQLSSPSL). The homeobox DNA-binding region spans 297-356 (RRKKRTSIETNVRFALEKSFLANQKPTSEEILLIAEQLHMEKEVIRVWFCNRRQKEKRIN). The interval 389–410 (LSQASSSLSTTVTTLSSAVGTL) is leucine-zipper. Residues 416-425 (AGGGGGGGGA) show a composition bias toward gly residues.

This sequence belongs to the POU transcription factor family. Class-2 subfamily. In terms of assembly, interacts with NR3C1, AR and PGR. Interacts with POU2AF1; the interaction increases POU2F2 transactivation activity. In terms of tissue distribution, isoform 3 is B-cell specific. Isoform 5 is expressed in B-cells and the immunoglobulin-expressing T-cell line MOLT-4, but not in the T-cell line BW5147.

The protein localises to the cytoplasm. The protein resides in the nucleus. Transactivation activity is enhanced by transcriptional coactivator POU2AF1. Its function is as follows. Transcription factor that specifically binds to the octamer motif (5'-ATTTGCAT-3'). Regulates IL6 expression in B cells with POU2AF1. Regulates transcription in a number of tissues in addition to activating immunoglobulin gene expression. Modulates transcription transactivation by NR3C1, AR and PGR. In terms of biological role, activates the U2 small nuclear RNA (snRNA) promoter. This is POU domain, class 2, transcription factor 2 from Homo sapiens (Human).